A 322-amino-acid polypeptide reads, in one-letter code: tRNA pseudouridine synthase B (322 aa).

Positions 1–11 (MRPPRTTELDR) are enriched in basic and acidic residues. The tract at residues 1-22 (MRPPRTTELDRPMTTAASQRPR) is disordered. Asp65 (nucleophile) is an active-site residue.

The protein belongs to the pseudouridine synthase TruB family. Type 1 subfamily.

The catalysed reaction is uridine(55) in tRNA = pseudouridine(55) in tRNA. Functionally, responsible for synthesis of pseudouridine from uracil-55 in the psi GC loop of transfer RNAs. The chain is tRNA pseudouridine synthase B from Burkholderia lata (strain ATCC 17760 / DSM 23089 / LMG 22485 / NCIMB 9086 / R18194 / 383).